A 505-amino-acid polypeptide reads, in one-letter code: Maturase K (505 aa).

It belongs to the intron maturase 2 family. MatK subfamily.

The protein resides in the plastid. It localises to the chloroplast. Its function is as follows. Usually encoded in the trnK tRNA gene intron. Probably assists in splicing its own and other chloroplast group II introns. The polypeptide is Maturase K (Ulmus parvifolia (Chinese elm)).